We begin with the raw amino-acid sequence, 185 residues long: Ribosome-recycling factor (185 aa).

It belongs to the RRF family.

It is found in the cytoplasm. Responsible for the release of ribosomes from messenger RNA at the termination of protein biosynthesis. May increase the efficiency of translation by recycling ribosomes from one round of translation to another. The protein is Ribosome-recycling factor of Bacillus cereus (strain B4264).